The primary structure comprises 342 residues: Hypoxia responsive morphology factor C (342 aa).

The Bipartite nuclear localization signal signature appears at 46-68; that stretch reads RMKIPRRKSEYSSHDRLKRARKI. The segment at 151–181 is RNA recognition motif (RRM)-like domain; the sequence is ADDAWAYNAADMDTAVKFFSEAIYKAIESSP.

The protein belongs to the hrmA family.

The protein localises to the nucleus. In terms of biological role, probably modulates the generation of the hypoxia-typic morphotype (called H-MORPH) with altered biofilm architecture that leads to increased host inflammation, rapid disease progression, and mortality in a murine model of invasive aspergillosis. The chain is Hypoxia responsive morphology factor C from Aspergillus fumigatus (strain CBS 144.89 / FGSC A1163 / CEA10) (Neosartorya fumigata).